Consider the following 122-residue polypeptide: Large ribosomal subunit protein bL12 (122 aa).

The protein belongs to the bacterial ribosomal protein bL12 family. In terms of assembly, homodimer. Part of the ribosomal stalk of the 50S ribosomal subunit. Forms a multimeric L10(L12)X complex, where L10 forms an elongated spine to which 2 to 4 L12 dimers bind in a sequential fashion. Binds GTP-bound translation factors.

Its function is as follows. Forms part of the ribosomal stalk which helps the ribosome interact with GTP-bound translation factors. Is thus essential for accurate translation. The sequence is that of Large ribosomal subunit protein bL12 from Streptococcus thermophilus (strain ATCC BAA-491 / LMD-9).